A 363-amino-acid polypeptide reads, in one-letter code: MEDGTLFAGAGFGAPAVQAGEVVFNTGMTGYQEVVTDPSYYGQIVVMTYPLIGNYGVTAADGESRQPWIRGLVVKELCDRPSHWQAVGSLSDYLAGCGVPILAGLDTRALTRHLRSHGTMRGVIATLPEGAEPGPAQVAAWVETARAFRLEGAVRSVATAAPYRIPGPGPRVVAVDFGAKENILRELTARGCDVTVVPATASAEEVLSLRPEGVVLTNGPGAPTDVPEAVEMVRGLLSQGDLPIFGICLGHQIAALALGATTYKLPYGHRGANHPVKELATGRIHITSQNHGYAVAAESLPPEVEVTHVSLHDGTVEGLAHRRLPLFTVQYHPEACPGPRENRYLFDRFLALVDRSAVSTRTA.

A CPSase region spans residues 1–171 (MEDGTLFAGA…PYRIPGPGPR (171 aa)). Residues Ser-39, Gly-219, and Gly-221 each coordinate L-glutamine. Residues 171 to 359 (RVVAVDFGAK…LALVDRSAVS (189 aa)) form the Glutamine amidotransferase type-1 domain. Residue Cys-248 is the Nucleophile of the active site. 5 residues coordinate L-glutamine: Leu-249, Gln-252, Asn-290, Gly-292, and Tyr-293. Residues His-332 and Glu-334 contribute to the active site.

The protein belongs to the CarA family. Composed of two chains; the small (or glutamine) chain promotes the hydrolysis of glutamine to ammonia, which is used by the large (or ammonia) chain to synthesize carbamoyl phosphate. Tetramer of heterodimers (alpha,beta)4.

It carries out the reaction hydrogencarbonate + L-glutamine + 2 ATP + H2O = carbamoyl phosphate + L-glutamate + 2 ADP + phosphate + 2 H(+). The enzyme catalyses L-glutamine + H2O = L-glutamate + NH4(+). It participates in amino-acid biosynthesis; L-arginine biosynthesis; carbamoyl phosphate from bicarbonate: step 1/1. The protein operates within pyrimidine metabolism; UMP biosynthesis via de novo pathway; (S)-dihydroorotate from bicarbonate: step 1/3. In terms of biological role, small subunit of the glutamine-dependent carbamoyl phosphate synthetase (CPSase). CPSase catalyzes the formation of carbamoyl phosphate from the ammonia moiety of glutamine, carbonate, and phosphate donated by ATP, constituting the first step of 2 biosynthetic pathways, one leading to arginine and/or urea and the other to pyrimidine nucleotides. The small subunit (glutamine amidotransferase) binds and cleaves glutamine to supply the large subunit with the substrate ammonia. In Symbiobacterium thermophilum (strain DSM 24528 / JCM 14929 / IAM 14863 / T), this protein is Carbamoyl phosphate synthase small chain.